The primary structure comprises 171 residues: Cation channel sperm-associated auxiliary subunit TMEM249 (171 aa).

Residues 1–2 lie on the Cytoplasmic side of the membrane; that stretch reads ML. A helical membrane pass occupies residues 3–17; sequence FIICLVFISCNVLRE. The Extracellular segment spans residues 18–28; it reads VKYQETWCFPA. Residues 29–40 form a helical membrane-spanning segment; it reads YGMVIGLWLMLS. At 41–171 the chain is on the cytoplasmic side; sequence SIPQRRLVLN…TKSSVNDLDV (131 aa).

In terms of assembly, component of the CatSper complex or CatSpermasome composed of the core pore-forming members CATSPER1, CATSPER2, CATSPER3 and CATSPER4 as well as auxiliary members CATSPERB, CATSPERG2, CATSPERD, CATSPERE, CATSPERZ, C2CD6/CATSPERT, SLCO6C1, TMEM249, TMEM262 and EFCAB9. HSPA1 may be an additional auxiliary complex member. The core complex members CATSPER1, CATSPER2, CATSPER3 and CATSPER4 form a heterotetrameric channel. The auxiliary CATSPERB, CATSPERG2, CATSPERD and CATSPERE subunits form a pavilion-like structure over the pore which stabilizes the complex through interactions with CATSPER4, CATSPER3, CATSPER1 and CATSPER2 respectively. SLCO6C1 interacts with CATSPERE and TMEM262/CATSPERH interacts with CATSPERB, further stabilizing the complex. C2CD6/CATSPERT interacts at least with CATSPERD and is required for targeting the CatSper complex in the flagellar membrane.

It localises to the cell projection. The protein resides in the cilium. The protein localises to the flagellum membrane. Auxiliary component of the CatSper complex, a complex involved in sperm cell hyperactivation. In Mus musculus (Mouse), this protein is Cation channel sperm-associated auxiliary subunit TMEM249.